Consider the following 340-residue polypeptide: Ribonucleoside-diphosphate reductase subunit beta (340 aa).

The Fe cation site is built by Asp-88 and His-122. Tyr-126 is a catalytic residue. His-216 is a binding site for Fe cation.

Belongs to the ribonucleoside diphosphate reductase small chain family. In terms of assembly, tetramer of two alpha and two beta subunits. The cofactor is Fe cation.

The catalysed reaction is a 2'-deoxyribonucleoside 5'-diphosphate + [thioredoxin]-disulfide + H2O = a ribonucleoside 5'-diphosphate + [thioredoxin]-dithiol. In terms of biological role, provides the precursors necessary for DNA synthesis. Catalyzes the biosynthesis of deoxyribonucleotides from the corresponding ribonucleotides. In Mycoplasma genitalium (strain ATCC 33530 / DSM 19775 / NCTC 10195 / G37) (Mycoplasmoides genitalium), this protein is Ribonucleoside-diphosphate reductase subunit beta (nrdF).